Consider the following 185-residue polypeptide: Elongation factor P (185 aa).

Belongs to the elongation factor P family.

It localises to the cytoplasm. It functions in the pathway protein biosynthesis; polypeptide chain elongation. In terms of biological role, involved in peptide bond synthesis. Stimulates efficient translation and peptide-bond synthesis on native or reconstituted 70S ribosomes in vitro. Probably functions indirectly by altering the affinity of the ribosome for aminoacyl-tRNA, thus increasing their reactivity as acceptors for peptidyl transferase. The protein is Elongation factor P of Burkholderia mallei (strain NCTC 10247).